The sequence spans 245 residues: 1-(5-phosphoribosyl)-5-[(5-phosphoribosylamino)methylideneamino] imidazole-4-carboxamide isomerase (245 aa).

Catalysis depends on D7, which acts as the Proton acceptor. D129 (proton donor) is an active-site residue.

It belongs to the HisA/HisF family.

The protein localises to the cytoplasm. It catalyses the reaction 1-(5-phospho-beta-D-ribosyl)-5-[(5-phospho-beta-D-ribosylamino)methylideneamino]imidazole-4-carboxamide = 5-[(5-phospho-1-deoxy-D-ribulos-1-ylimino)methylamino]-1-(5-phospho-beta-D-ribosyl)imidazole-4-carboxamide. Its pathway is amino-acid biosynthesis; L-histidine biosynthesis; L-histidine from 5-phospho-alpha-D-ribose 1-diphosphate: step 4/9. The chain is 1-(5-phosphoribosyl)-5-[(5-phosphoribosylamino)methylideneamino] imidazole-4-carboxamide isomerase from Escherichia fergusonii (strain ATCC 35469 / DSM 13698 / CCUG 18766 / IAM 14443 / JCM 21226 / LMG 7866 / NBRC 102419 / NCTC 12128 / CDC 0568-73).